Consider the following 341-residue polypeptide: L-threonine 3-dehydrogenase (341 aa).

Zn(2+) is bound at residue Cys-38. Catalysis depends on charge relay system residues Thr-40 and His-43. Residues His-63, Glu-64, Cys-93, Cys-96, Cys-99, and Cys-107 each coordinate Zn(2+). NAD(+) is bound by residues Ile-175, Asp-195, Arg-200, 262–264, and 286–287; these read LGI and IY.

It belongs to the zinc-containing alcohol dehydrogenase family. In terms of assembly, homotetramer. The cofactor is Zn(2+).

Its subcellular location is the cytoplasm. The enzyme catalyses L-threonine + NAD(+) = (2S)-2-amino-3-oxobutanoate + NADH + H(+). It participates in amino-acid degradation; L-threonine degradation via oxydo-reductase pathway; glycine from L-threonine: step 1/2. Functionally, catalyzes the NAD(+)-dependent oxidation of L-threonine to 2-amino-3-ketobutyrate. The sequence is that of L-threonine 3-dehydrogenase from Shewanella baltica (strain OS223).